Reading from the N-terminus, the 216-residue chain is Lipoprotein-releasing system ATP-binding protein LolD (216 aa).

The ABC transporter domain occupies 2–216 (IHLEGITKSF…TIHMVDGNII (215 aa)). 34–41 (GPSGAGKT) contributes to the ATP binding site.

Belongs to the ABC transporter superfamily. Lipoprotein translocase (TC 3.A.1.125) family. The complex is composed of two ATP-binding proteins (LolD) and two transmembrane proteins (LolC and LolE).

It is found in the cell inner membrane. In terms of biological role, part of the ABC transporter complex LolCDE involved in the translocation of mature outer membrane-directed lipoproteins, from the inner membrane to the periplasmic chaperone, LolA. Responsible for the formation of the LolA-lipoprotein complex in an ATP-dependent manner. The polypeptide is Lipoprotein-releasing system ATP-binding protein LolD (Bacteroides fragilis (strain YCH46)).